Reading from the N-terminus, the 291-residue chain is 33 kDa chaperonin (291 aa).

Cystine bridges form between Cys229-Cys231 and Cys262-Cys265.

This sequence belongs to the HSP33 family. Under oxidizing conditions two disulfide bonds are formed involving the reactive cysteines. Under reducing conditions zinc is bound to the reactive cysteines and the protein is inactive.

It is found in the cytoplasm. In terms of biological role, redox regulated molecular chaperone. Protects both thermally unfolding and oxidatively damaged proteins from irreversible aggregation. Plays an important role in the bacterial defense system toward oxidative stress. In Vibrio cholerae serotype O1 (strain ATCC 39315 / El Tor Inaba N16961), this protein is 33 kDa chaperonin.